Consider the following 241-residue polypeptide: Deoxynucleotide monophosphate kinase (241 aa).

Residue K10 coordinates dGMP. Residues R11, G13, D15, and T16 each coordinate ATP. The dGMP site is built by I36 and K37. Position 42 (Y42) interacts with Mg(2+). A dGMP-binding site is contributed by R68. Mg(2+) contacts are provided by Q85 and E108. R132, G139, T140, V144, W152, D175, R177, Q178, E181, and T208 together coordinate dGMP.

It belongs to the dNMP kinase family. Homodimer. Mg(2+) is required as a cofactor.

It catalyses the reaction dTMP + ATP = dTDP + ADP. It carries out the reaction dGMP + ATP = dGDP + ADP. The enzyme catalyses 5-hydroxymethyl-dCMP + ATP = 5-hydroxymethyl-dCDP + ADP. Inhibited by pyridoxal 5'-phosphate and diethylpyrocarbonate. Allows the synthesis of deoxyribonucleoside triphosphates necessary for the rapid viral DNA replication. Phosphorylates dGMP, dTMP and 5-hydroxymethyl-dCMP (hmdCMP) while excluding dCMP and dAMP. The phosphorylation of 5-hydroxymethyl-dCMP represents the first step in the replacement of cytosine by hydroxymethylcytosine in new viral DNA genomes. The protein is Deoxynucleotide monophosphate kinase (1) of Enterobacteria phage T4 (Bacteriophage T4).